Here is a 643-residue protein sequence, read N- to C-terminus: Manganese lipoxygenase (643 aa).

In terms of domain architecture, Lipoxygenase spans 166–643 (WYTDEVFAQQ…PEQLANAIVI (478 aa)). Residues His-325, His-330, His-510, Asn-514, and Ile-643 each contribute to the Mn(2+) site.

This sequence belongs to the lipoxygenase family. Mn(2+) is required as a cofactor.

It carries out the reaction (9Z,12Z)-octadecadienoate + O2 = (13S)-hydroperoxy-(9Z,11E)-octadecadienoate. Functionally, lipoxygenase that metabolizes linoleic and alpha-linolenic acids to 13S-hydroperoxy fatty acids. This chain is Manganese lipoxygenase, found in Pleurotus sapidus (Oyster mushroom).